The sequence spans 375 residues: Succinyl-diaminopimelate desuccinylase (375 aa).

His66 contributes to the Zn(2+) binding site. Residue Asp68 is part of the active site. Asp99 lines the Zn(2+) pocket. Catalysis depends on Glu133, which acts as the Proton acceptor. Zn(2+) is bound by residues Glu134, Glu162, and His348.

This sequence belongs to the peptidase M20A family. DapE subfamily. Homodimer. Requires Zn(2+) as cofactor. Co(2+) serves as cofactor.

It catalyses the reaction N-succinyl-(2S,6S)-2,6-diaminopimelate + H2O = (2S,6S)-2,6-diaminopimelate + succinate. Its pathway is amino-acid biosynthesis; L-lysine biosynthesis via DAP pathway; LL-2,6-diaminopimelate from (S)-tetrahydrodipicolinate (succinylase route): step 3/3. Its function is as follows. Catalyzes the hydrolysis of N-succinyl-L,L-diaminopimelic acid (SDAP), forming succinate and LL-2,6-diaminopimelate (DAP), an intermediate involved in the bacterial biosynthesis of lysine and meso-diaminopimelic acid, an essential component of bacterial cell walls. The protein is Succinyl-diaminopimelate desuccinylase of Methylobacillus flagellatus (strain ATCC 51484 / DSM 6875 / VKM B-1610 / KT).